Consider the following 364-residue polypeptide: D-alanine--D-alanine ligase (364 aa).

Residues 134–344 (KVLLKSFNIP…YESLVDKLIT (211 aa)) form the ATP-grasp domain. 167–222 (NNKLNYPVIVKPSVLGSSIGINVAYNVSQIEKYIEEAFEYDLTVVVEKFIKAREIE) lines the ATP pocket. Residues D297, E311, and N313 each coordinate Mg(2+).

It belongs to the D-alanine--D-alanine ligase family. It depends on Mg(2+) as a cofactor. Mn(2+) is required as a cofactor.

It localises to the cytoplasm. The catalysed reaction is 2 D-alanine + ATP = D-alanyl-D-alanine + ADP + phosphate + H(+). The protein operates within cell wall biogenesis; peptidoglycan biosynthesis. In terms of biological role, cell wall formation. In Borrelia duttonii (strain Ly), this protein is D-alanine--D-alanine ligase.